A 345-amino-acid chain; its full sequence is G-protein coupled receptor family C group 5 member D (345 aa).

Over 1 to 27 (MYKDCIESTGDYFLLCDAEGPWGIILE) the chain is Extracellular. The helical transmembrane segment at 28–48 (SLAILGIVVTILLLLAFLFLM) threads the bilayer. Residues 49–63 (RKIQDCSQWNVLPTQ) are Cytoplasmic-facing. The chain crosses the membrane as a helical span at residues 64–84 (LLFLLSVLGLFGLAFAFIIEL). Over 85 to 93 (NQQTAPVRY) the chain is Extracellular. A helical membrane pass occupies residues 94–114 (FLFGVLFALCFSCLLAHASNL). Over 115-123 (VKLVRGCVS) the chain is Cytoplasmic. Residues 124-144 (FSWTTILCIAIGCSLLQIIIA) form a helical membrane-spanning segment. The Extracellular segment spans residues 145–167 (TEYVTLIMTRGMMFVNMTPCQLN). Residues 168–188 (VDFVVLLVYVLFLMALTFFVS) form a helical membrane-spanning segment. Residues 189–204 (KATFCGPCENWKQHGR) are Cytoplasmic-facing. A helical membrane pass occupies residues 205-225 (LIFITVLFSIIIWVVWISMLL). Topologically, residues 226–239 (RGNPQFQRQPQWDD) are extracellular. The helical transmembrane segment at 240–260 (PVVCIALVTNAWVFLLLYIVP) threads the bilayer. Topologically, residues 261–345 (ELCILYRSCR…LSPQQDAGGV (85 aa)) are cytoplasmic.

This sequence belongs to the G-protein coupled receptor 3 family. Homodimer. As to expression, widely expressed in the peripheral system. Expression pattern is high in pancreas, medium in kidney, small intestine, spleen and testis, low in lung, colon, leukocyte, prostate and thymus and not detectable in brain, heart, liver, placenta, skeletal muscle and ovary.

Its subcellular location is the cell membrane. Functionally, G-protein coupled receptor involved in hard keratin expression and likely plays a role in the development of hair and nails. In Homo sapiens (Human), this protein is G-protein coupled receptor family C group 5 member D (GPRC5D).